The chain runs to 323 residues: MSHTNVTIFHPAVFVLPGIPGLEAYHIWLSIPLCLIYITAVLGNSILIVVIVMERNLHVPMYFFLSMLAVMDILLSTTTVPKALAIFWLQAHNIAFDACVTQGFFVHMMFVGESAILLAMAFDRFVAICAPLRYTTVLTWPVVGRIALAVITRSFCIIFPVIFLLKRLPFCLTNIVPHSYCEHIGVARLACADITVNIWYGFSVPIVMVILDVILIAVSYSLILRAVFRLPSQDARHKALSTCGSHLCVILMFYVPSFFTLLTHHFGRNIPQHVHILLANLYVAVPPMLNPIVYGVKTKQIREGVAHRFFDIKTWCCTSPLGS.

Topologically, residues 1–27 (MSHTNVTIFHPAVFVLPGIPGLEAYHI) are extracellular. Asn5 carries N-linked (GlcNAc...) asparagine glycosylation. A helical transmembrane segment spans residues 28 to 48 (WLSIPLCLIYITAVLGNSILI). The Cytoplasmic portion of the chain corresponds to 49-56 (VVIVMERN). The chain crosses the membrane as a helical span at residues 57 to 77 (LHVPMYFFLSMLAVMDILLST). Topologically, residues 78-101 (TTVPKALAIFWLQAHNIAFDACVT) are extracellular. Cys99 and Cys191 are joined by a disulfide. Residues 102 to 122 (QGFFVHMMFVGESAILLAMAF) form a helical membrane-spanning segment. Over 123–141 (DRFVAICAPLRYTTVLTWP) the chain is Cytoplasmic. A helical membrane pass occupies residues 142–162 (VVGRIALAVITRSFCIIFPVI). The Extracellular segment spans residues 163–198 (FLLKRLPFCLTNIVPHSYCEHIGVARLACADITVNI). A helical membrane pass occupies residues 199 to 219 (WYGFSVPIVMVILDVILIAVS). At 220–239 (YSLILRAVFRLPSQDARHKA) the chain is on the cytoplasmic side. A helical membrane pass occupies residues 240–260 (LSTCGSHLCVILMFYVPSFFT). The Extracellular segment spans residues 261-275 (LLTHHFGRNIPQHVH). Residues 276-296 (ILLANLYVAVPPMLNPIVYGV) form a helical membrane-spanning segment. Over 297–323 (KTKQIREGVAHRFFDIKTWCCTSPLGS) the chain is Cytoplasmic.

This sequence belongs to the G-protein coupled receptor 1 family.

The protein resides in the cell membrane. Its function is as follows. Odorant receptor. The sequence is that of Olfactory receptor 52B2 (OR52B2) from Homo sapiens (Human).